We begin with the raw amino-acid sequence, 223 residues long: Translation initiation factor 6 (223 aa).

Belongs to the eIF-6 family.

Its function is as follows. Binds to the 50S ribosomal subunit and prevents its association with the 30S ribosomal subunit to form the 70S initiation complex. This is Translation initiation factor 6 from Sulfolobus acidocaldarius (strain ATCC 33909 / DSM 639 / JCM 8929 / NBRC 15157 / NCIMB 11770).